The sequence spans 248 residues: MGYNKSLRYSRHNGTTCVIDNKHLKTLGSVLGDVRHKEELIREAQFDPIKDIANQYMVTEDPFRGPGKNVKITLFKEIRRIQPDTMKLVCNWSGKEFLRETWTRFISEEFPITTDQEIMDLWFELQLRPMQPNRCYKFTMQYALAANPDYVAHDVIRQHDPYYVGPDNRERINLSKRGLAFPLTCLQSIYNENFEEFFDQVLWPYFHRPLVYVGTTSAEIEEVMIEVALLFKIKEFAPDVPLFTGPAY.

It belongs to the polyhedrin family.

Component of the virus occlusion bodies, which are large proteinaceous structures, that protect the virus from the outside environment for extended periods until they are ingested by insect larvae. This is Granulin from Trichoplusia ni (Cabbage looper).